Consider the following 1156-residue polypeptide: MSKREAFLQATAKDSVEDFLSFIQLHKDVSDPFDLNELLQELSRKQKEELWEKLKTLLTEALVANPVERWQNIDDDSDDDMEVESSSDVKQTMCVIHGVTIAAAASLCVIDEDVCYETLLECAAILSGIVHALPKSESHITLAIRHLCEAWWEKGLQGKEEFGKTAFLLLLAKSLEVKCVVADIGRLWHLHQTLLSFDFNSEESHNVKDLLLQCFLSINHIKKEEGRRFLSFLFSWDVNFIKMIHGTIKNQLQCLPKSLMTHIADIYFRAWKKASGDVLQTIEQSCIQDFMHHGVHLPRNSPLHPKVREVLSYFHQQKLRQGVEEMLYNLYQPIIWRGLKARNSEVRSNAALLFVEAFPIRDPNLNHEDMDNEIQKQFEELFNLLEDPQPLVRSTGVLGVCKITAKYWEMIPPAILTDLLRKILGDLAADVSSADVRCSVFKCLPILLDNKLSHPLLENMLPALKFCLHDNSEKVRVAFVDMLLKIKAVRAAKFWKICPMEQILARLEVDSRPVSRRIVNLLFNSFFPVNQQEEVWCERCVALIQMNPAAARKFYQYAYEHTAPTNIAKLMLTIRRCLNACINRTVPNEDTEDEDDDEGDGEGIVRGDSEKENKSVLENVLSTEDSASMASLLEIVVVLWRSIRKALDQNEEAKTYTISKFASVLPEYFKAFKEERCTVPLIILASFMPPAAVPTFSCSVLSKLRHLDSGADEQKYSTLIDCLCRWGQVGHVLELASEWLSESYPEKRGRKDSNRQVRIQDTMESKPALALDYIEYIMTHTMNRDCLLSLQTKKLNQLLKVLGLVKEVLFCYIKPSEAVTHNVNQDTALRAFSLYCRLSIHLQHKFSSEGRTYLSVLEDTGGWIESQVLPTLESNQDISEEPRNMCHQILKAYLTVCKDVLMVGLADSEFQAQLLQITLSVIQTEKCHNCLPMLFYVLKEITELCLAHKMSDASVECDEMLDAIQKAFHKSLETVARRLRKQREEALQLLQTIQLPLGEFVHTVQCWHTASKVLHRGTLSTLLAAVVVEISHSLRKITDLSELTPPSSISDLPPLSKCIMTIIVKSPSAVSSFLDELTECITLEEVEGILSLTAALYVAVVSSKRKQIPPAVKNTASAIYRKLKNFCEVTMDDAGSIERAVYESSMRILNEMLHPS.

The HEAT repeat unit spans residues 460-498 (MLPALKFCLHDNSEKVRVAFVDMLLKIKAVRAAKFWKIC). Positions 587–611 (PNEDTEDEDDDEGDGEGIVRGDSEK) are disordered. Over residues 589–601 (EDTEDEDDDEGDG) the composition is skewed to acidic residues.

In terms of assembly, component of the condensin-2 complex, which contains the smc2 and smc4 heterodimer, and three non SMC subunits that probably regulate the complex: ncaph2, ncapd3 and ncapg2.

It localises to the nucleus. Its function is as follows. Regulatory subunit of the condensin-2 complex, a complex which establishes mitotic chromosome architecture and is involved in physical rigidity of the chromatid axis. This Xenopus laevis (African clawed frog) protein is Condensin-2 complex subunit G2 (ncapg2).